Consider the following 42-residue polypeptide: TYYELIKAAILALKERNGSSAQAIKKYILENNKIEFQQTFLR.

An H15 domain is found at 1–42 (TYYELIKAAILALKERNGSSAQAIKKYILENNKIEFQQTFLR).

This sequence belongs to the histone H1/H5 family.

It localises to the nucleus. Its subcellular location is the chromosome. Histones H1 are necessary for the condensation of nucleosome chains into higher-order structures. The sequence is that of Histone H1B from Olisthodiscus luteus (Marine phytoflagellate).